Consider the following 86-residue polypeptide: Short neurotoxin homolog NTL1 (86 aa).

An N-terminal signal peptide occupies residues 1–21; sequence MKTLLLSLVVLTIACLDLGYT. Disulfide bonds link C24/C45, C38/C62, C66/C78, and C79/C84.

Expressed by the venom gland.

The protein resides in the secreted. The polypeptide is Short neurotoxin homolog NTL1 (Bungarus multicinctus (Many-banded krait)).